We begin with the raw amino-acid sequence, 418 residues long: E3 ubiquitin-protein ligase pellino homolog 1 (418 aa).

One can recognise an FHA; atypical domain in the interval 13-200; the sequence is APVKYGELIV…MHPRNGFTED (188 aa). Position 121 is a phosphoserine; by ATM (S121). T127 bears the Phosphothreonine; by ATM mark. The interval 311–399 is ring-like domain; necessary for ubiqitination of RIPK3; sequence CGHVHGYHNW…TFHAACPFCA (89 aa).

It belongs to the pellino family. Interacts with MAP3K7. Upon IL1B treatment, forms a complex with TRAF6, IRAK1, IRAK4 and MYD88; this complex recruits MAP3K7/TAK1, TAB1 and TAB2 to mediate NF-kappa-B activation. Direct binding of SMAD6 to PELI1 prevents the complex formation and hence negatively regulates IL1R-TLR signaling and eventually NF-kappa-B-mediated gene expression. Interacts (via atypical FHA domain) with RIPK3; preferentially binds to the 'Thr-182' phosphorylated form of RIPK3. Interacts with RIPK1 and IRAK1. Phosphorylation by IRAK1 and IRAK4 enhances its E3 ligase activity. Phosphorylated by ATM in response to DNA damage, promoting localization to DNA double-strand breaks (DSBs) and ability to mediate 'Lys-63'-linked ubiquitination of NBN. In terms of processing, sumoylated. In terms of tissue distribution, expressed at high levels in normal skin but decreased in keratinocytes from toxic epidermal necrolysis (TEN) patients (at protein level).

The protein localises to the chromosome. The enzyme catalyses S-ubiquitinyl-[E2 ubiquitin-conjugating enzyme]-L-cysteine + [acceptor protein]-L-lysine = [E2 ubiquitin-conjugating enzyme]-L-cysteine + N(6)-ubiquitinyl-[acceptor protein]-L-lysine.. It participates in protein modification; protein ubiquitination. In terms of biological role, E3 ubiquitin ligase catalyzing the covalent attachment of ubiquitin moieties onto substrate proteins. Involved in the TLR and IL-1 signaling pathways via interaction with the complex containing IRAK kinases and TRAF6. Acts as a positive regulator of inflammatory response in microglia through activation of NF-kappa-B and MAP kinase. Mediates 'Lys-63'-linked polyubiquitination of IRAK1 allowing subsequent NF-kappa-B activation. Conjugates 'Lys-63'-linked ubiquitin chains to the adapter protein ASC/PYCARD, which in turn is crucial for NLRP3 inflammasome activation. Mediates 'Lys-48'-linked polyubiquitination of RIPK3 leading to its subsequent proteasome-dependent degradation; preferentially recognizes and mediates the degradation of the 'Thr-182' phosphorylated form of RIPK3. Negatively regulates necroptosis by reducing RIPK3 expression. Mediates 'Lys-63'-linked ubiquitination of RIPK1. Following phosphorylation by ATM, catalyzes 'Lys-63'-linked ubiquitination of NBN, promoting DNA repair via homologous recombination. Negatively regulates activation of the metabolic mTORC1 signaling pathway by mediating 'Lys-63'-linked ubiquitination of mTORC1-inhibitory protein TSC1 and thereby promoting TSC1/TSC2 complex stability. The protein is E3 ubiquitin-protein ligase pellino homolog 1 of Homo sapiens (Human).